We begin with the raw amino-acid sequence, 209 residues long: Ion-translocating oxidoreductase complex subunit G (209 aa).

Residues 9 to 29 traverse the membrane as a helical segment; sequence GITLAIFAALTTGLTAVVNSL. FMN phosphoryl threonine is present on threonine 175.

Belongs to the RnfG family. The complex is composed of six subunits: RnfA, RnfB, RnfC, RnfD, RnfE and RnfG. FMN serves as cofactor.

The protein resides in the cell inner membrane. Part of a membrane-bound complex that couples electron transfer with translocation of ions across the membrane. This chain is Ion-translocating oxidoreductase complex subunit G, found in Photorhabdus laumondii subsp. laumondii (strain DSM 15139 / CIP 105565 / TT01) (Photorhabdus luminescens subsp. laumondii).